Consider the following 204-residue polypeptide: Terpene cyclase trt1 (204 aa).

The next 5 helical transmembrane spans lie at 44 to 64 (FMSICCDVAWEFVYAFVYPIA), 67 to 87 (HWAGGIRIWFAMHCVMLFIVA), 103 to 122 (FARLAYVAITIGFMAGHLAL), 132 to 154 (FFWSGALCQITASLGSLCLLVCR), and 169 to 189 (WFYIAITLTLDAIYPVFFFYF).

The protein belongs to the paxB family.

It is found in the membrane. The protein operates within secondary metabolite biosynthesis; terpenoid biosynthesis. Terpene cyclase; part of the gene cluster that mediates the biosynthesis of terretonin, a fungal meroterpenoid that acts as a mycotoxin. The first step of the pathway is the synthesis of 3,5-dimethylorsellinic acid (DMOA) by the polyketide synthase trt4. DMOA is then prenylated into farnesyl-DMOA by the polyprenyl transferase trt2. Methylation by the methyltransferase trt5 then leads to farnesyl-DMOA methyl ester which is further subject to epoxidation by the FAD-dependent monooxygenase trt8 to yield epoxyfarnesyl-DMOA methyl ester. Cyclization of epoxyfarnesyl-DMOA methyl ester by the terpene cyclase trt1 leads to a tetracycle intermediate which is in turn converted to preterretonin. Dehydrogenase trt9 comes next to transform preterretonin to preterrenoid. The FAD-dependent monooxygenase trt3 is then required for the C-hydroxylation at C16 of preterrenoid to yield terrenoid. The cytochrome P450 trt6 catalyzes three successive oxidations to transform terrenoid into an unstable intermediate, which then undergoes the D-ring expansion and unusual rearrangement of the methoxy group to afford the core skeleton of terretonin. Trt14 catalyzes the D-ring expansion of terretonin involving intramolecular methoxy rearrangement as well as the hydrolysis of the expanded D-ring and the methyl ester moiety. Finally, the nonheme iron-dependent dioxygenase trt7 accomplishes the last two oxidation reactions steps to complete the biosynthesis of terretonin. Terretonin C is produced via spontaneous decarboxylation of the terretonin precursor. Another shunt product of the terretonin biosynthesis is dihydrofarnesyl-DMOA, derived from epoxyfarnesyl-DMOA through hydrolysis of the epoxide. In Aspergillus terreus (strain NIH 2624 / FGSC A1156), this protein is Terpene cyclase trt1.